The primary structure comprises 645 residues: Alkyldihydroxyacetonephosphate synthase, peroxisomal (645 aa).

The segment covering 1–10 (MAEAAAGEAG) has biased composition (low complexity). The transit peptide at 1–45 (MAEAAAGEAGASERDPDAGRARRRLRVLSGHLLGRPQEAPSTNEC) directs the protein to the peroxisome. A disordered region spans residues 1–72 (MAEAAAGEAG…AAPESGTIPK (72 aa)). Residues 11 to 20 (ASERDPDAGR) are compositionally biased toward basic and acidic residues. Positions 50–69 (AASAAGASPAATPAAPESGT) are enriched in low complexity. Residues S52 and S57 each carry the phosphoserine modification. Phosphothreonine is present on T61. K89 is modified (N6-acetyllysine). The FAD-binding PCMH-type domain occupies 189-371 (FERIPDIVVW…TEATIKIRPT (183 aa)). Residues 221–227 (PIGGGTS), 290–296 (DSLEFST), and 303–306 (TRAS) contribute to the FAD site. An N6-acetyllysine modification is found at K334. 355 to 361 (EGTLGVI) is an FAD binding site. R502 provides a ligand contact to substrate. Y565 acts as the Proton donor/acceptor in catalysis. Important for enzyme activity stretches follow at residues 602–604 (HHH) and 641–645 (NRNLL).

Belongs to the FAD-binding oxidoreductase/transferase type 4 family. Homodimer. FAD serves as cofactor.

It is found in the peroxisome membrane. The protein localises to the peroxisome. It catalyses the reaction a long chain fatty alcohol + a 1-acylglycerone 3-phosphate = a 1-O-alkylglycerone 3-phosphate + a long-chain fatty acid + H(+). The enzyme catalyses hexadecan-1-ol + 1-hexadecanoylglycerone 3-phosphate = 1-O-hexadecylglycerone 3-phosphate + hexadecanoate + H(+). The catalysed reaction is 1-hexadecanoylglycerone 3-phosphate + a long-chain fatty acid = a 1-acylglycerone 3-phosphate + hexadecanoate. It participates in glycerolipid metabolism; ether lipid biosynthesis. Catalyzes the exchange of the acyl chain in acyl-dihydroxyacetonephosphate (acyl-DHAP) for a long chain fatty alcohol, yielding the first ether linked intermediate, i.e. alkyl-dihydroxyacetonephosphate (alkyl-DHAP), in the pathway of ether lipid biosynthesis. The polypeptide is Alkyldihydroxyacetonephosphate synthase, peroxisomal (Agps) (Mus musculus (Mouse)).